The following is a 196-amino-acid chain: MGRKDKYALIHYKLMDLSDYIEAGNKARRSIDLNHIEKIGRDIVNVFNSGGKLIVFGNGGSAADSQHFVAELSGHFSKERKALPAMALTVNTSALTAISNDYSYDVVFSRQLEAFAKPGDYVVGISTSGNSVNVVKGLERAKELGCKTLAMTGRSGGKIAKVAEEAIMIDSEVTSIIQEAHIAAIHMICSVIDSYY.

The 154-residue stretch at 43 to 196 (IVNVFNSGGK…MICSVIDSYY (154 aa)) folds into the SIS domain. 58-60 (NGG) provides a ligand contact to substrate. Zn(2+) contacts are provided by His-67 and Glu-71. Substrate contacts are provided by residues Glu-71, 100 to 101 (ND), 126 to 128 (STS), Ser-131, and Gln-178. Positions 178 and 186 each coordinate Zn(2+).

This sequence belongs to the SIS family. GmhA subfamily. Zn(2+) is required as a cofactor.

The protein localises to the cytoplasm. The catalysed reaction is 2 D-sedoheptulose 7-phosphate = D-glycero-alpha-D-manno-heptose 7-phosphate + D-glycero-beta-D-manno-heptose 7-phosphate. Its pathway is carbohydrate biosynthesis; D-glycero-D-manno-heptose 7-phosphate biosynthesis; D-glycero-alpha-D-manno-heptose 7-phosphate and D-glycero-beta-D-manno-heptose 7-phosphate from sedoheptulose 7-phosphate: step 1/1. Functionally, catalyzes the isomerization of sedoheptulose 7-phosphate in D-glycero-D-manno-heptose 7-phosphate. In Thermoplasma volcanium (strain ATCC 51530 / DSM 4299 / JCM 9571 / NBRC 15438 / GSS1), this protein is Probable phosphoheptose isomerase.